Here is a 553-residue protein sequence, read N- to C-terminus: Pumilio domain-containing protein 5 (553 aa).

Pumilio repeat units follow at residues 146 to 184 (DVVSNGSLIDFAMDRTGVKFLERHFPEDHDNEMHFVLFD), 185 to 223 (KLTEQGAVFTSLCRSAAGNFIIQKFVEHATLDEQERLVR), 224 to 260 (KMCDNGLIEMCLDKFACRVVQMSIQKFDVSIAMKLVE), 261 to 296 (KISSLDFLPLCTDQCAIHVLQKVVKLLPISAWSFFV), 297 to 335 (KFLCRDDNLMTVCQDKYGCRLVQQTIDKLSDNPKLHCFN), 347 to 384 (SVARNCFRLSSNEFANYVVQYVIKSSGVMEMYRDTIIE), 386 to 421 (CLLRNILSMSQDKYASHVVEGAFLFAPPLLLSEMMD), and 432 to 472 (ETNR…KMVA). The tract at residues 499 to 514 (FSSGKKIIESLQKLNV) is RNA-binding.

Detected in differentiating oocytes with highest levels observed in developing ooctyes in the distal portion of the proximal gonad.

The protein resides in the cytoplasm. The protein localises to the P-body. RNA-binding protein that binds to the consensus sequence 5'-CUCUGUAUCUUGU-3' in mRNA 3'-UTRs and modulates mRNA expression and stability. Functions redundantly with puf-6 and puf-7 in oocyte formation and organization, early embryonic cell divisions, and repression of expression of glp-1 and other maternal mRNAs in late oogenesis. This is Pumilio domain-containing protein 5 from Caenorhabditis elegans.